A 172-amino-acid polypeptide reads, in one-letter code: Small ribosomal subunit protein uS4 (172 aa).

An S4 RNA-binding domain is found at 104 to 168 (RRLQTIVYRK…SPLAKMAQGG (65 aa)).

Belongs to the universal ribosomal protein uS4 family. In terms of assembly, part of the 30S ribosomal subunit. Contacts protein S5. The interaction surface between S4 and S5 is involved in control of translational fidelity.

In terms of biological role, one of the primary rRNA binding proteins, it binds directly to 16S rRNA where it nucleates assembly of the body of the 30S subunit. Its function is as follows. With S5 and S12 plays an important role in translational accuracy. The polypeptide is Small ribosomal subunit protein uS4 (Thermofilum pendens (strain DSM 2475 / Hrk 5)).